Here is a 243-residue protein sequence, read N- to C-terminus: Venom peptide isomerase heavy chain (243 aa).

A Peptidase S1 domain is found at 1–243 (IVGGKTAKFG…YTNWMSKNMV (243 aa)). Cys-31 and Cys-47 are joined by a disulfide. Catalysis depends on charge relay system residues His-46 and Asp-96. N-linked (GlcNAc...) asparagine glycosylation is present at Asn-127. 2 cysteine pairs are disulfide-bonded: Cys-159/Cys-181 and Cys-190/Cys-219. Ser-194 acts as the Charge relay system in catalysis.

Belongs to the peptidase S1 family. As to quaternary structure, heterodimer with venom peptide isomerase light chain; disulfide-linked. Post-translationally, N-linked glycan at Asn-127 consists of Man3-GlcNAc2-Fuc. As to expression, expressed by the venom gland.

It localises to the secreted. Its function is as follows. Peptide isomerase that inverts the chirality at the Ser-81 of omega-Aga IVB. Acts cofactor-independently. The protein is Venom peptide isomerase heavy chain of Agelenopsis aperta (North American funnel-web spider).